The following is a 408-amino-acid chain: Imidazolonepropionase (408 aa).

2 residues coordinate Fe(3+): His-73 and His-75. Zn(2+) is bound by residues His-73 and His-75. 4-imidazolone-5-propanoate contacts are provided by Arg-82, Tyr-145, and His-178. Tyr-145 lines the N-formimidoyl-L-glutamate pocket. A Fe(3+)-binding site is contributed by His-243. His-243 serves as a coordination point for Zn(2+). Gln-246 provides a ligand contact to 4-imidazolone-5-propanoate. Asp-318 serves as a coordination point for Fe(3+). Position 318 (Asp-318) interacts with Zn(2+). Asn-320 and Gly-322 together coordinate N-formimidoyl-L-glutamate. Ser-323 provides a ligand contact to 4-imidazolone-5-propanoate.

This sequence belongs to the metallo-dependent hydrolases superfamily. HutI family. Zn(2+) serves as cofactor. Requires Fe(3+) as cofactor.

The protein localises to the cytoplasm. It carries out the reaction 4-imidazolone-5-propanoate + H2O = N-formimidoyl-L-glutamate. It participates in amino-acid degradation; L-histidine degradation into L-glutamate; N-formimidoyl-L-glutamate from L-histidine: step 3/3. Its function is as follows. Catalyzes the hydrolytic cleavage of the carbon-nitrogen bond in imidazolone-5-propanoate to yield N-formimidoyl-L-glutamate. It is the third step in the universal histidine degradation pathway. This is Imidazolonepropionase from Shewanella baltica (strain OS195).